Reading from the N-terminus, the 137-residue chain is Protein LTO1 homolog (137 aa).

N-acetylalanine is present on Ala-2. Ser-4 bears the Phosphoserine mark. Residues 22-58 form a deca-GX3 motif; required for interaction with YAE1 and the CIA complex region; it reads GYREGYEEGSSLGVMEGRQHGTLHGAKIGSEIGCYQG.

Belongs to the LTO1 family. As to quaternary structure, forms a complex with YAE1. Interacts with PYCR1 and PYCR2. Widely expressed. Highly expressed in placenta, kidney and skeletal muscle.

The protein localises to the nucleus. In terms of biological role, the complex LTO1:YAE1 functions as a target specific adapter that probably recruits apo-ABCE1 to the cytosolic iron-sulfur protein assembly (CIA) complex machinery. May be required for biogenesis of the large ribosomal subunit and initiation of translation. May play a role in the regulation of proline metabolism and ROS production. In Homo sapiens (Human), this protein is Protein LTO1 homolog.